The chain runs to 433 residues: 3-phosphoshikimate 1-carboxyvinyltransferase (433 aa).

3-phosphoshikimate is bound by residues Lys21, Ser22, and Arg26. Residue Lys21 coordinates phosphoenolpyruvate. Residues Gly96 and Arg124 each contribute to the phosphoenolpyruvate site. Positions 167, 168, 169, 195, 310, and 337 each coordinate 3-phosphoshikimate. Residue Gln169 participates in phosphoenolpyruvate binding. The Proton acceptor role is filled by Asp310. Arg341, Arg384, and Lys410 together coordinate phosphoenolpyruvate.

The protein belongs to the EPSP synthase family. As to quaternary structure, monomer.

It localises to the cytoplasm. The enzyme catalyses 3-phosphoshikimate + phosphoenolpyruvate = 5-O-(1-carboxyvinyl)-3-phosphoshikimate + phosphate. Its pathway is metabolic intermediate biosynthesis; chorismate biosynthesis; chorismate from D-erythrose 4-phosphate and phosphoenolpyruvate: step 6/7. Its function is as follows. Catalyzes the transfer of the enolpyruvyl moiety of phosphoenolpyruvate (PEP) to the 5-hydroxyl of shikimate-3-phosphate (S3P) to produce enolpyruvyl shikimate-3-phosphate and inorganic phosphate. This chain is 3-phosphoshikimate 1-carboxyvinyltransferase, found in Clostridium botulinum (strain Alaska E43 / Type E3).